A 240-amino-acid chain; its full sequence is Phosphoribosylaminoimidazole-succinocarboxamide synthase (240 aa).

The protein belongs to the SAICAR synthetase family.

It carries out the reaction 5-amino-1-(5-phospho-D-ribosyl)imidazole-4-carboxylate + L-aspartate + ATP = (2S)-2-[5-amino-1-(5-phospho-beta-D-ribosyl)imidazole-4-carboxamido]succinate + ADP + phosphate + 2 H(+). The protein operates within purine metabolism; IMP biosynthesis via de novo pathway; 5-amino-1-(5-phospho-D-ribosyl)imidazole-4-carboxamide from 5-amino-1-(5-phospho-D-ribosyl)imidazole-4-carboxylate: step 1/2. The protein is Phosphoribosylaminoimidazole-succinocarboxamide synthase of Wolbachia sp. subsp. Drosophila simulans (strain wRi).